The chain runs to 265 residues: Type III pantothenate kinase (265 aa).

Position 17 to 24 (17 to 24 (DIGNTSIS)) interacts with ATP. 114–117 (GSDV) provides a ligand contact to substrate. Asp-116 acts as the Proton acceptor in catalysis. Residue Asp-137 coordinates K(+). ATP is bound at residue Thr-140. Position 192 (Thr-192) interacts with substrate.

It belongs to the type III pantothenate kinase family. In terms of assembly, homodimer. Requires NH4(+) as cofactor. The cofactor is K(+).

Its subcellular location is the cytoplasm. It carries out the reaction (R)-pantothenate + ATP = (R)-4'-phosphopantothenate + ADP + H(+). Its pathway is cofactor biosynthesis; coenzyme A biosynthesis; CoA from (R)-pantothenate: step 1/5. Functionally, catalyzes the phosphorylation of pantothenate (Pan), the first step in CoA biosynthesis. The chain is Type III pantothenate kinase from Borrelia hermsii (strain HS1 / DAH).